The chain runs to 820 residues: Trimethylamine-N-oxide reductase (820 aa).

The segment at residues 1-33 (MAITRRSFLKGVATTSAASVIGPSLLASASANA) is a signal peptide (tat-type signal). Residue serine 179 coordinates Mo-bis(molybdopterin guanine dinucleotide).

Belongs to the prokaryotic molybdopterin-containing oxidoreductase family. It depends on Mo-bis(molybdopterin guanine dinucleotide) as a cofactor. Post-translationally, predicted to be exported by the Tat system. The position of the signal peptide cleavage has not been experimentally proven.

Its subcellular location is the periplasm. It catalyses the reaction trimethylamine + 2 Fe(III)-[cytochrome c] + H2O = trimethylamine N-oxide + 2 Fe(II)-[cytochrome c] + 3 H(+). Reduces trimethylamine-N-oxide (TMAO) into trimethylamine; an anaerobic reaction coupled to energy-yielding reactions. This Vibrio parahaemolyticus serotype O3:K6 (strain RIMD 2210633) protein is Trimethylamine-N-oxide reductase (torA).